The primary structure comprises 296 residues: NAD kinase (296 aa).

Residue D73 is the Proton acceptor of the active site. NAD(+)-binding positions include 73 to 74, K78, 151 to 152, R178, D180, and 191 to 196; these read DG, NE, and TAHAMS.

The protein belongs to the NAD kinase family. A divalent metal cation is required as a cofactor.

The protein localises to the cytoplasm. It carries out the reaction NAD(+) + ATP = ADP + NADP(+) + H(+). Its function is as follows. Involved in the regulation of the intracellular balance of NAD and NADP, and is a key enzyme in the biosynthesis of NADP. Catalyzes specifically the phosphorylation on 2'-hydroxyl of the adenosine moiety of NAD to yield NADP. The protein is NAD kinase of Francisella tularensis subsp. tularensis (strain WY96-3418).